The following is a 355-amino-acid chain: Probable protein phosphatase 2C 21 (355 aa).

The region spanning R23–F329 is the PPM-type phosphatase domain. Residues D57, G58, D272, and D320 each contribute to the Mn(2+) site. Residues F329–S355 are disordered.

Belongs to the PP2C family. It depends on Mg(2+) as a cofactor. Mn(2+) is required as a cofactor.

The enzyme catalyses O-phospho-L-seryl-[protein] + H2O = L-seryl-[protein] + phosphate. It catalyses the reaction O-phospho-L-threonyl-[protein] + H2O = L-threonyl-[protein] + phosphate. This chain is Probable protein phosphatase 2C 21 (PPC4-2), found in Arabidopsis thaliana (Mouse-ear cress).